A 96-amino-acid polypeptide reads, in one-letter code: UPF0125 protein YfjF (96 aa).

Belongs to the UPF0125 (RnfH) family.

This Escherichia coli O157:H7 protein is UPF0125 protein YfjF (yfjF).